The sequence spans 513 residues: Glycogen synthase (513 aa).

K47 is a binding site for ADP-alpha-D-glucose.

The protein belongs to the glycosyltransferase 1 family. Bacterial/plant glycogen synthase subfamily.

The enzyme catalyses [(1-&gt;4)-alpha-D-glucosyl](n) + ADP-alpha-D-glucose = [(1-&gt;4)-alpha-D-glucosyl](n+1) + ADP + H(+). The protein operates within glycan biosynthesis; glycogen biosynthesis. Functionally, synthesizes alpha-1,4-glucan chains using ADP-glucose. In Pseudomonas aeruginosa (strain ATCC 15692 / DSM 22644 / CIP 104116 / JCM 14847 / LMG 12228 / 1C / PRS 101 / PAO1), this protein is Glycogen synthase.